Here is a 706-residue protein sequence, read N- to C-terminus: Glycylpeptide N-tetradecanoyltransferase (706 aa).

The segment at 1–119 (MSGIAGTSQD…LASGSSREGK (119 aa)) is disordered. Over residues 7–42 (TSQDTSVAASASSSSTRPAAASSSIAPPSPSLTTAP) the composition is skewed to low complexity. Over residues 47-65 (EQDDDDDQENDDEEEEEEG) the composition is skewed to acidic residues. Over residues 78 to 95 (KQRKKKKSKAAAKLRKKL) the composition is skewed to basic residues. Residues 180-183 (HKFW), 317-319 (LCV), and 325-329 (SKRLA) each bind tetradecanoyl-CoA. Catalysis depends on V706, which acts as the Proton acceptor; via carboxylate.

This sequence belongs to the NMT family. Monomer.

The protein localises to the cytoplasm. It carries out the reaction N-terminal glycyl-[protein] + tetradecanoyl-CoA = N-tetradecanoylglycyl-[protein] + CoA + H(+). Adds a myristoyl group to the N-terminal glycine residue of certain cellular proteins. The sequence is that of Glycylpeptide N-tetradecanoyltransferase (NMT1) from Mycosarcoma maydis (Corn smut fungus).